The following is a 248-amino-acid chain: Ubiquinone/menaquinone biosynthesis C-methyltransferase UbiE (248 aa).

S-adenosyl-L-methionine contacts are provided by Ser68 and Asp92.

The protein belongs to the class I-like SAM-binding methyltransferase superfamily. MenG/UbiE family.

The catalysed reaction is a 2-demethylmenaquinol + S-adenosyl-L-methionine = a menaquinol + S-adenosyl-L-homocysteine + H(+). It carries out the reaction a 2-methoxy-6-(all-trans-polyprenyl)benzene-1,4-diol + S-adenosyl-L-methionine = a 5-methoxy-2-methyl-3-(all-trans-polyprenyl)benzene-1,4-diol + S-adenosyl-L-homocysteine + H(+). Its pathway is quinol/quinone metabolism; menaquinone biosynthesis; menaquinol from 1,4-dihydroxy-2-naphthoate: step 2/2. It functions in the pathway cofactor biosynthesis; ubiquinone biosynthesis. In terms of biological role, methyltransferase required for the conversion of demethylmenaquinol (DMKH2) to menaquinol (MKH2) and the conversion of 2-polyprenyl-6-methoxy-1,4-benzoquinol (DDMQH2) to 2-polyprenyl-3-methyl-6-methoxy-1,4-benzoquinol (DMQH2). In Rickettsia bellii (strain RML369-C), this protein is Ubiquinone/menaquinone biosynthesis C-methyltransferase UbiE.